A 661-amino-acid chain; its full sequence is UvrABC system protein B (661 aa).

In terms of domain architecture, Helicase ATP-binding spans 28–414; it reads DGVNEGKRHQ…HTDEMVEQII (387 aa). 41-48 contributes to the ATP binding site; that stretch reads GATGTGKT. The Beta-hairpin motif lies at 94 to 117; the sequence is YYDYYQPEAYVPSTDTFIEKDASI. A Helicase C-terminal domain is found at 432–598; the sequence is QIDDLLSEIQ…TINKKIHDVI (167 aa). The disordered stretch occupies residues 603–624; that stretch reads ESDETNQQQQTELPKKMTKKER. In terms of domain architecture, UVR spans 625 to 660; that stretch reads QKTIENIEKEMKKAAKDLDFEKATELRDMLFELKAE.

It belongs to the UvrB family. Forms a heterotetramer with UvrA during the search for lesions. Interacts with UvrC in an incision complex.

The protein resides in the cytoplasm. Functionally, the UvrABC repair system catalyzes the recognition and processing of DNA lesions. A damage recognition complex composed of 2 UvrA and 2 UvrB subunits scans DNA for abnormalities. Upon binding of the UvrA(2)B(2) complex to a putative damaged site, the DNA wraps around one UvrB monomer. DNA wrap is dependent on ATP binding by UvrB and probably causes local melting of the DNA helix, facilitating insertion of UvrB beta-hairpin between the DNA strands. Then UvrB probes one DNA strand for the presence of a lesion. If a lesion is found the UvrA subunits dissociate and the UvrB-DNA preincision complex is formed. This complex is subsequently bound by UvrC and the second UvrB is released. If no lesion is found, the DNA wraps around the other UvrB subunit that will check the other stand for damage. This chain is UvrABC system protein B, found in Staphylococcus epidermidis (strain ATCC 35984 / DSM 28319 / BCRC 17069 / CCUG 31568 / BM 3577 / RP62A).